Consider the following 43-residue polypeptide: Protein PsbN (43 aa).

Residues A4 to Y24 form a helical membrane-spanning segment.

This sequence belongs to the PsbN family.

It localises to the cellular thylakoid membrane. May play a role in photosystem I and II biogenesis. In Trichormus variabilis (strain ATCC 29413 / PCC 7937) (Anabaena variabilis), this protein is Protein PsbN.